Consider the following 233-residue polypeptide: Large ribosomal subunit protein uL1 (233 aa).

Belongs to the universal ribosomal protein uL1 family. Part of the 50S ribosomal subunit.

Functionally, binds directly to 23S rRNA. The L1 stalk is quite mobile in the ribosome, and is involved in E site tRNA release. In terms of biological role, protein L1 is also a translational repressor protein, it controls the translation of the L11 operon by binding to its mRNA. This Marinomonas sp. (strain MWYL1) protein is Large ribosomal subunit protein uL1.